Here is a 678-residue protein sequence, read N- to C-terminus: Zinc finger protein 334 (678 aa).

One can recognise a KRAB domain in the interval 8-79 (VSFQDLTVNF…EEFSNQNYPE (72 aa)). 14 consecutive C2H2-type zinc fingers follow at residues 235 to 257 (NEPC…QRIH), 263 to 285 (YVCN…QRIH), 291 to 313 (YECS…QKIH), 319 to 341 (YECN…FRSH), 347 to 369 (YECK…QRTH), 375 to 397 (NECK…QRIH), 403 to 425 (YECS…RRSH), 431 to 453 (YECS…QITH), 459 to 481 (YECN…QRTH), 542 to 564 (YECN…QRTH), 570 to 592 (YECN…QRTH), 598 to 620 (YERN…RRIH), 626 to 648 (YECN…QKIH), and 654 to 676 (YECN…QKSH).

This sequence belongs to the krueppel C2H2-type zinc-finger protein family.

It is found in the nucleus. Its function is as follows. May be involved in transcriptional regulation. The chain is Zinc finger protein 334 (ZNF334) from Pongo abelii (Sumatran orangutan).